We begin with the raw amino-acid sequence, 190 residues long: NADH dehydrogenase [ubiquinone] iron-sulfur protein 3 (190 aa).

It belongs to the complex I 30 kDa subunit family. In terms of assembly, complex I is composed of about 45 different subunits. This is a component of the iron-sulfur (IP) fragment of the enzyme.

The protein resides in the mitochondrion inner membrane. The catalysed reaction is a ubiquinone + NADH + 5 H(+)(in) = a ubiquinol + NAD(+) + 4 H(+)(out). Its function is as follows. Core subunit of the mitochondrial membrane respiratory chain NADH dehydrogenase (Complex I) that is believed to belong to the minimal assembly required for catalysis. Complex I functions in the transfer of electrons from NADH to the respiratory chain. The immediate electron acceptor for the enzyme is believed to be ubiquinone. The protein is NADH dehydrogenase [ubiquinone] iron-sulfur protein 3 (NAD9) of Oryza sativa subsp. japonica (Rice).